The following is a 168-amino-acid chain: G/U mismatch-specific DNA glycosylase (168 aa).

The protein belongs to the uracil-DNA glycosylase (UDG) superfamily. TDG/mug family. In terms of assembly, binds DNA as a monomer.

It localises to the cytoplasm. The enzyme catalyses Specifically hydrolyzes mismatched double-stranded DNA and polynucleotides, releasing free uracil.. Excises ethenocytosine and uracil, which can arise by alkylation or deamination of cytosine, respectively, from the corresponding mispairs with guanine in ds-DNA. It is capable of hydrolyzing the carbon-nitrogen bond between the sugar-phosphate backbone of the DNA and the mispaired base. The complementary strand guanine functions in substrate recognition. Required for DNA damage lesion repair in stationary-phase cells. This Salmonella dublin (strain CT_02021853) protein is G/U mismatch-specific DNA glycosylase.